A 148-amino-acid polypeptide reads, in one-letter code: MMDLQRTQSLLLLLVLTLLGLGLVQPSYGQDRMYQRFLRQHVDPQATGGNDNYCNVMMQRRKMTSVQCKRFNTFIHEDIWNIRGICSTTNILCKNGQMNCHEGVVKVTDCRETGNSKAPNCRYRARTSTRRVVIACEGDPEVPVHFDR.

A signal peptide spans 1–29; the sequence is MMDLQRTQSLLLLLVLTLLGLGLVQPSYG. Residue glutamine 30 is modified to Pyrrolidone carboxylic acid. The dUMP site is built by arginine 36, histidine 41, lysine 69, asparagine 72, and threonine 73. Residue histidine 41 is the Proton acceptor of the active site. 4 cysteine pairs are disulfide-bonded: cysteine 54/cysteine 110, cysteine 68/cysteine 121, cysteine 86/cysteine 136, and cysteine 93/cysteine 100. Catalysis depends on histidine 145, which acts as the Proton donor. Phenylalanine 146 contacts dUMP.

This sequence belongs to the pancreatic ribonuclease family. In terms of tissue distribution, expressed in the cortical tubules of the kidney (at protein level). Also expressed in the medullary tubules of the kidney.

The protein localises to the secreted. In terms of biological role, cleaves preferentially after uridine bases. Has antimicrobial activity against uropathogenic E.coli (UPEC). Probably contributes to urinary tract sterility. The sequence is that of Ribonuclease 4 (Rnase4) from Mus musculus (Mouse).